A 218-amino-acid chain; its full sequence is tRNA (guanine-N(7)-)-methyltransferase (218 aa).

The disordered stretch occupies residues 1–26 (MRLKNKPWANELVEEHPESALDRPDP). A compositionally biased stretch (basic and acidic residues) spans 13–26 (VEEHPESALDRPDP). 4 residues coordinate S-adenosyl-L-methionine: Glu-45, Glu-70, Asp-97, and Asp-119. Residue Asp-119 is part of the active site. Lys-123 lines the substrate pocket. The tract at residues 125–130 (RHEKRR) is interaction with RNA. Substrate-binding positions include Asp-155 and 195-198 (TEYE).

Belongs to the class I-like SAM-binding methyltransferase superfamily. TrmB family.

The enzyme catalyses guanosine(46) in tRNA + S-adenosyl-L-methionine = N(7)-methylguanosine(46) in tRNA + S-adenosyl-L-homocysteine. It participates in tRNA modification; N(7)-methylguanine-tRNA biosynthesis. Functionally, catalyzes the formation of N(7)-methylguanine at position 46 (m7G46) in tRNA. The protein is tRNA (guanine-N(7)-)-methyltransferase of Lactobacillus delbrueckii subsp. bulgaricus (strain ATCC 11842 / DSM 20081 / BCRC 10696 / JCM 1002 / NBRC 13953 / NCIMB 11778 / NCTC 12712 / WDCM 00102 / Lb 14).